Consider the following 155-residue polypeptide: MPEASSPFPDGIVLGFDVGTRRIGVAVGSALGAGARAVAVIDVHGVAVDWNALDRVKRNWLPVGLVVGDPLTLEGHDQPIRKQAHAFACQLRERYRLPVVLVDERSSSVEAASRFAGARAAGYKRRRDADTLDAIAAAVILERWLADPMQATSLP.

Belongs to the YqgF nuclease family.

The protein resides in the cytoplasm. Functionally, could be a nuclease involved in processing of the 5'-end of pre-16S rRNA. This Xylella fastidiosa (strain M23) protein is Putative pre-16S rRNA nuclease.